The primary structure comprises 287 residues: Formamidopyrimidine-DNA glycosylase (287 aa).

Proline 2 serves as the catalytic Schiff-base intermediate with DNA. Glutamate 3 (proton donor) is an active-site residue. Catalysis depends on lysine 61, which acts as the Proton donor; for beta-elimination activity. DNA contacts are provided by histidine 95, arginine 115, and arginine 157. The segment at 243–277 (NVYGRADQPCRRCGEPVRREAFMNRSSFSCPRCQP) adopts an FPG-type zinc-finger fold. Catalysis depends on arginine 267, which acts as the Proton donor; for delta-elimination activity.

It belongs to the FPG family. As to quaternary structure, monomer. Requires Zn(2+) as cofactor.

The enzyme catalyses Hydrolysis of DNA containing ring-opened 7-methylguanine residues, releasing 2,6-diamino-4-hydroxy-5-(N-methyl)formamidopyrimidine.. The catalysed reaction is 2'-deoxyribonucleotide-(2'-deoxyribose 5'-phosphate)-2'-deoxyribonucleotide-DNA = a 3'-end 2'-deoxyribonucleotide-(2,3-dehydro-2,3-deoxyribose 5'-phosphate)-DNA + a 5'-end 5'-phospho-2'-deoxyribonucleoside-DNA + H(+). In terms of biological role, involved in base excision repair of DNA damaged by oxidation or by mutagenic agents. Acts as a DNA glycosylase that recognizes and removes damaged bases. Has a preference for oxidized purines, such as 7,8-dihydro-8-oxoguanine (8-oxoG). Has AP (apurinic/apyrimidinic) lyase activity and introduces nicks in the DNA strand. Cleaves the DNA backbone by beta-delta elimination to generate a single-strand break at the site of the removed base with both 3'- and 5'-phosphates. This Salinispora tropica (strain ATCC BAA-916 / DSM 44818 / JCM 13857 / NBRC 105044 / CNB-440) protein is Formamidopyrimidine-DNA glycosylase.